We begin with the raw amino-acid sequence, 557 residues long: Aerobic glycerol-3-phosphate dehydrogenase (557 aa).

Position 21 to 49 (21 to 49 (DVVIIGGGITGAGIALDASQRGMKVALVE)) interacts with FAD.

This sequence belongs to the FAD-dependent glycerol-3-phosphate dehydrogenase family. FAD serves as cofactor.

It localises to the cytoplasm. It carries out the reaction a quinone + sn-glycerol 3-phosphate = dihydroxyacetone phosphate + a quinol. The protein operates within polyol metabolism; glycerol degradation via glycerol kinase pathway; glycerone phosphate from sn-glycerol 3-phosphate (aerobic route): step 1/1. The sequence is that of Aerobic glycerol-3-phosphate dehydrogenase (glpD) from Staphylococcus haemolyticus (strain JCSC1435).